Consider the following 243-residue polypeptide: Pyridoxine 5'-phosphate synthase (243 aa).

Asn9 contributes to the 3-amino-2-oxopropyl phosphate binding site. Residue 11 to 12 participates in 1-deoxy-D-xylulose 5-phosphate binding; sequence DH. Arg20 is a 3-amino-2-oxopropyl phosphate binding site. The active-site Proton acceptor is His45. 1-deoxy-D-xylulose 5-phosphate is bound by residues Arg47 and His52. The Proton acceptor role is filled by Glu72. Thr102 is a 1-deoxy-D-xylulose 5-phosphate binding site. Catalysis depends on His193, which acts as the Proton donor. Residues Gly194 and 215–216 each bind 3-amino-2-oxopropyl phosphate; that span reads GH.

The protein belongs to the PNP synthase family. In terms of assembly, homooctamer; tetramer of dimers.

It localises to the cytoplasm. The enzyme catalyses 3-amino-2-oxopropyl phosphate + 1-deoxy-D-xylulose 5-phosphate = pyridoxine 5'-phosphate + phosphate + 2 H2O + H(+). It participates in cofactor biosynthesis; pyridoxine 5'-phosphate biosynthesis; pyridoxine 5'-phosphate from D-erythrose 4-phosphate: step 5/5. In terms of biological role, catalyzes the complicated ring closure reaction between the two acyclic compounds 1-deoxy-D-xylulose-5-phosphate (DXP) and 3-amino-2-oxopropyl phosphate (1-amino-acetone-3-phosphate or AAP) to form pyridoxine 5'-phosphate (PNP) and inorganic phosphate. The sequence is that of Pyridoxine 5'-phosphate synthase from Salmonella paratyphi A (strain ATCC 9150 / SARB42).